Reading from the N-terminus, the 296-residue chain is Homeobox protein SIX2 (296 aa).

Residues 124 to 183 (GEETSYCFKEKSRSVLREWYAHNPYPSPREKRELAEATGLTTTQVSNWFKNRRQRDRAAE) constitute a DNA-binding region (homeobox). Residues 168 to 284 (VSNWFKNRRQ…HHHSLQDSIL (117 aa)) form a disordered region. The segment covering 179–190 (DRAAEAKERENS) has biased composition (basic and acidic residues). Composition is skewed to low complexity over residues 191 to 206 (ENSN…SSLN) and 228 to 237 (HSSSSPALLL). A compositionally biased stretch (pro residues) spans 254–264 (PPGPSAVPVPV).

Belongs to the SIX/Sine oculis homeobox family. Interacts with TCF7L2; in a canonical Wnt signaling independent manner; prevents transcription of differentiation genes in cap mesenchyme. Interacts with OSR1; form a strong repressor complex with TCF7L2, TLE2 and TLE3 to prevent the activation of Wnt/beta-catenin target genes in the cap mesenchyme. Interacts with HOXA11, EYA1 and EYA3. In terms of tissue distribution, expressed in phalangeal tendons, in smooth muscle and in head and body mesenchyme.

The protein localises to the nucleus. Transcription factor that plays an important role in the development of several organs, including kidney, skull and stomach. During kidney development, maintains cap mesenchyme multipotent nephron progenitor cells in an undifferentiated state by opposing the inductive signals emanating from the ureteric bud and cooperates with WNT9B to promote renewing progenitor cells proliferation. Acts through its interaction with TCF7L2 and OSR1 in a canonical Wnt signaling independent manner preventing transcription of differentiation genes in cap mesenchyme such as WNT4. Also acts independently of OSR1 to activate expression of many cap mesenchyme genes, including itself, GDNF and OSR1. During craniofacial development plays a role in growth and elongation of the cranial base through regulation of chondrocyte differentiation. During stomach organogenesis, controls pyloric sphincter formation and mucosal growth through regulation of a gene network including NKX2-5, BMPR1B, BMP4, SOX9 and GREM1. During branchial arch development, acts to mediate HOXA2 control over the insulin-like growth factor pathway. May also be involved in limb tendon and ligament development. Plays a role in cell proliferation and migration. In Mus musculus (Mouse), this protein is Homeobox protein SIX2 (Six2).